The sequence spans 300 residues: D-alanine--D-alanine ligase (300 aa).

An ATP-grasp domain is found at 99-293; sequence KKILKYANIN…FAELLNSIVK (195 aa). Residue 126-181 coordinates ATP; that stretch reads IEKIGYPVFVKPNSGGSSVATNLVKDKEGIKEAVELALKYDKEVMIENYTKGEEIT. Mg(2+) contacts are provided by D248, E260, and N262.

It belongs to the D-alanine--D-alanine ligase family. Mg(2+) serves as cofactor. Mn(2+) is required as a cofactor.

It localises to the cytoplasm. The enzyme catalyses 2 D-alanine + ATP = D-alanyl-D-alanine + ADP + phosphate + H(+). Its pathway is cell wall biogenesis; peptidoglycan biosynthesis. In terms of biological role, cell wall formation. The protein is D-alanine--D-alanine ligase of Clostridium botulinum (strain Langeland / NCTC 10281 / Type F).